A 1960-amino-acid polypeptide reads, in one-letter code: Transcription factor 20 (1960 aa).

Residues 1–18 are compositionally biased toward polar residues; sequence MQSFREQSSYHGNQQSYP. Positions 1–287 are disordered; sequence MQSFREQSSY…GSNAQAYGTQ (287 aa). Residues 42 to 60 are compositionally biased toward gly residues; that stretch reads GGTGGSSGSSGSGSGGGRR. Position 60 is an omega-N-methylarginine (Arg-60). Positions 61 to 75 are enriched in low complexity; sequence GAAAAAAAMASETSG. Positions 122-131 are enriched in polar residues; sequence QGSSFGNQYG. A compositionally biased stretch (low complexity) spans 164-192; it reads SAQYQQQASSQQQQQQVQQLRQQLYQSHQ. Polar residues predominate over residues 193–219; it reads PLPQATGQPASSSSHLQPMQRPSTLPS. Over residues 236–259 the composition is skewed to low complexity; the sequence is QSSASSSSSSSFPSPQRFSQSGQS. 2 stretches are compositionally biased toward polar residues: residues 260-270 and 277-287; these read YDGSYNVNAGS and VGSNAQAYGTQ. Lys-304 participates in a covalent cross-link: Glycyl lysine isopeptide (Lys-Gly) (interchain with G-Cter in SUMO2). Disordered stretches follow at residues 305-328 and 360-392; these read IPQG…SQHV and FHQN…LMQT. 2 stretches are compositionally biased toward low complexity: residues 306–322 and 368–388; these read PQGT…QQQQ and SNPS…TPSP. A phosphoserine mark is found at Ser-419 and Ser-430. The tract at residues 476 to 748 is disordered; that stretch reads SDALTPQKKT…HGERKGRNEK (273 aa). 2 stretches are compositionally biased toward polar residues: residues 497–508 and 537–547; these read SCTNSEGSSQPE and LSGQSTSSDTT. Ser-538, Ser-559, Ser-574, and Ser-583 each carry phosphoserine. Position 602 is an N6-acetyllysine (Lys-602). A compositionally biased stretch (basic and acidic residues) spans 616–628; sequence RVEKPGGQDKGSQ. Position 640 is a phosphoserine (Ser-640). Over residues 665 to 677 the composition is skewed to low complexity; it reads GNKNGDNNSNHNG. Residues 693 to 702 are compositionally biased toward polar residues; the sequence is TSRTEPSKSP. Glycyl lysine isopeptide (Lys-Gly) (interchain with G-Cter in SUMO2) cross-links involve residues Lys-710, Lys-733, Lys-748, Lys-823, Lys-832, and Lys-844. Over residues 732 to 748 the composition is skewed to basic and acidic residues; sequence EKGDFTGHGERKGRNEK. Phosphoserine is present on Ser-871. Residues Lys-920 and Lys-922 each participate in a glycyl lysine isopeptide (Lys-Gly) (interchain with G-Cter in SUMO2) cross-link. The segment at 920–1037 is disordered; it reads KLKSQSGQIK…GDPHHMNPHM (118 aa). Lys-929 participates in a covalent cross-link: Glycyl lysine isopeptide (Lys-Gly) (interchain with G-Cter in SUMO1); alternate. Lys-929 is covalently cross-linked (Glycyl lysine isopeptide (Lys-Gly) (interchain with G-Cter in SUMO2); alternate). Residues 936 to 945 are compositionally biased toward polar residues; it reads SKSQASFNNK. Positions 946-961 are enriched in basic and acidic residues; the sequence is KSGDHCHPPSIKHESY. Lys-957 is covalently cross-linked (Glycyl lysine isopeptide (Lys-Gly) (interchain with G-Cter in SUMO2)). A phosphoserine mark is found at Ser-966 and Ser-1005. A Glycyl lysine isopeptide (Lys-Gly) (interchain with G-Cter in SUMO2) cross-link involves residue Lys-1015. Residue Arg-1024 is modified to Omega-N-methylarginine. Ser-1053 bears the Phosphoserine mark. Glycyl lysine isopeptide (Lys-Gly) (interchain with G-Cter in SUMO2) cross-links involve residues Lys-1086, Lys-1098, Lys-1137, Lys-1173, Lys-1178, Lys-1183, Lys-1210, Lys-1231, Lys-1267, and Lys-1274. Disordered stretches follow at residues 1110–1142, 1162–1285, and 1303–1331; these read AAAQ…DKDG, RCLM…GRLL, and SHSQ…CPAV. Residues 1130-1142 show a composition bias toward basic and acidic residues; sequence DRVRSPLKNDKDG. A leucine-zipper region spans residues 1170–1191; it reads LPNKGMELKHGSQKLQESCWDL. Residues 1254–1268 carry the Nuclear localization signal motif; the sequence is RRRVRSFISPIPSKR. A compositionally biased stretch (basic and acidic residues) spans 1304–1318; that stretch reads HSQDIKSIPKRDSSK. Ser-1305 is subject to Phosphoserine. Lys-1309 participates in a covalent cross-link: Glycyl lysine isopeptide (Lys-Gly) (interchain with G-Cter in SUMO2). The residue at position 1335 (Ser-1335) is a Phosphoserine. A Glycyl lysine isopeptide (Lys-Gly) (interchain with G-Cter in SUMO2) cross-link involves residue Lys-1338. Phosphoserine is present on Ser-1361. The tract at residues 1384–1607 is disordered; sequence DILSLKSGPP…TKQAVPIVEP (224 aa). Glycyl lysine isopeptide (Lys-Gly) (interchain with G-Cter in SUMO2) cross-links involve residues Lys-1389, Lys-1409, Lys-1428, and Lys-1446. Residues 1424–1451 show a composition bias toward basic and acidic residues; that stretch reads LHVEKPLPRSSEEWRGSVDDKVKTETHA. Over residues 1464-1477 the composition is skewed to polar residues; the sequence is MTSTTSQKPGSNQG. Lys-1510 participates in a covalent cross-link: Glycyl lysine isopeptide (Lys-Gly) (interchain with G-Cter in SUMO2). Ser-1522 is modified (phosphoserine). Residue Lys-1524 forms a Glycyl lysine isopeptide (Lys-Gly) (interchain with G-Cter in SUMO2) linkage. The a.T hook DNA-binding region spans 1537-1551; it reads GKKKGRPIGSVNKQK. Pro residues predominate over residues 1555–1566; it reads QPPPPPPQPPQI. The Nuclear localization signal signature appears at 1576-1600; it reads KPKKQRQRRERRKPGAQPRKRKTKQ. Basic residues predominate over residues 1578–1599; the sequence is KKQRQRRERRKPGAQPRKRKTK. A Glycyl lysine isopeptide (Lys-Gly) (interchain with G-Cter in SUMO2) cross-link involves residue Lys-1613. Disordered regions lie at residues 1660–1683 and 1732–1839; these read LVRG…KALP and TLPK…PELE. A Phosphoserine modification is found at Ser-1669. Phosphothreonine occurs at positions 1671, 1762, and 1764. The Nuclear localization signal signature appears at 1785–1792; the sequence is RFKRRHRS. The segment at 1829-1865 adopts a C2HC pre-PHD-type; degenerate zinc-finger fold; the sequence is PTTSEGGPELELQIPELPLDSNEFWVHEGCILWANGI. A PHD-type zinc finger spans residues 1885-1933; it reads MKCSHCQEAGATLGCYNKGCSFRYHYPCAIDADCLLHEENFSVRCPKHK. Positions 1939 to 1960 are disordered; sequence PLPPLQNKTAKGSLSTEQSERG. A compositionally biased stretch (polar residues) spans 1944–1960; sequence QNKTAKGSLSTEQSERG.

As to quaternary structure, homodimer. Interacts with RNF4 and JUN. In terms of tissue distribution, expressed in most tissues, except in ovary and prostate. Isoform 1 is exclusively expressed in brain, heart and testis, and this form predominates in liver and kidney. Isoform 2 predominates in lung.

It localises to the nucleus. Transcriptional activator that binds to the regulatory region of MMP3 and thereby controls stromelysin expression. It stimulates the activity of various transcriptional activators such as JUN, SP1, PAX6 and ETS1, suggesting a function as a coactivator. This Homo sapiens (Human) protein is Transcription factor 20 (TCF20).